Reading from the N-terminus, the 175-residue chain is B9 domain-containing protein 2 (175 aa).

The C2 B9-type domain maps to Ala-2–Ser-118.

It belongs to the B9D family. In terms of assembly, part of the tectonic-like complex (also named B9 complex). Interacts with TUBG1. As to expression, highest expression in thymus and skeletal muscle. Also expressed in spleen, kidney, lung, heart, microglia and liver. Detected in brain (at protein level).

Its subcellular location is the cytoplasm. It is found in the cytoskeleton. It localises to the cilium basal body. The protein resides in the cilium axoneme. The protein localises to the nucleus. Functionally, component of the tectonic-like complex, a complex localized at the transition zone of primary cilia and acting as a barrier that prevents diffusion of transmembrane proteins between the cilia and plasma membranes. The polypeptide is B9 domain-containing protein 2 (B9d2) (Mus musculus (Mouse)).